The chain runs to 341 residues: Chitin synthase 3 complex protein CSI2 (341 aa).

Positions 35–70 are enriched in low complexity; that stretch reads SSSTKAADSSSKGSSSAKTTTSLGKSSVTSKDVSSS. 3 disordered regions span residues 35 to 78, 272 to 291, and 298 to 341; these read SSST…SSTK, DSLSSTPREPGATQILGKFT, and NYTS…DGKE.

In terms of biological role, appears to be a structural component of the chitin synthase 3 complex. In Saccharomyces cerevisiae (strain ATCC 204508 / S288c) (Baker's yeast), this protein is Chitin synthase 3 complex protein CSI2 (CSI2).